The chain runs to 784 residues: Toll-like receptor 2 (784 aa).

The signal sequence occupies residues 1–20 (MPHTLWMVWVLGVIISLSKE). The Extracellular portion of the chain corresponds to 21 to 587 (ESSNQASLSC…VRLSVSECHR (567 aa)). Cysteines 30 and 36 form a disulfide. 19 LRR repeats span residues 54–77 (VKSL…RCVN), 78–101 (LQAL…SLGS), 102–125 (LEHL…PLSS), 126–150 (LTFL…HLTK), 151–175 (LQIL…GLTF), 176–199 (LEEL…SIQN), 200–223 (VSHL…VTSS), 224–250 (VECL…TNSL), 251–278 (IKKF…QISG), 279–308 (LLEL…DPGK), 309–337 (VETL…LTER), 338–361 (VKRI…HLKS), 362–388 (LEYL…AWPS), 389–414 (LQTL…TLKN), 415–437 (LTNV…WPEK), 438–457 (MKYL…CIPK), 458–478 (TLEI…NLPQ), 479–500 (LKEL…LLPM), and 501–524 (LLVL…SFHT). Residue N114 is glycosylated (N-linked (GlcNAc...) asparagine). A glycan (N-linked (GlcNAc...) asparagine) is linked at N199. A disulfide bond links C353 and C382. A glycan (N-linked (GlcNAc...) asparagine) is linked at N414. The cysteines at positions 432 and 454 are disulfide-linked. N442 carries N-linked (GlcNAc...) asparagine glycosylation. Residues 525 to 579 (LKTLEAGGNNFICSCEFLSFTQEQQALAKVLIDWPANYLCDSPSHVRGQQVQDVR) enclose the LRRCT domain. The chain crosses the membrane as a helical span at residues 588–608 (TALVSGMCCALFLLILLTGVL). At 609 to 784 (CHRFHGLWYM…WVNLRAAIKS (176 aa)) the chain is on the cytoplasmic side. One can recognise a TIR domain in the interval 639–782 (ICYDAFVSYS…GFWVNLRAAI (144 aa)). K754 is covalently cross-linked (Glycyl lysine isopeptide (Lys-Gly) (interchain with G-Cter in ubiquitin)). Positions 761 to 778 (YLEWPMDEAQREGFWVNL) match the ATG16L1-binding motif motif.

The protein belongs to the Toll-like receptor family. Interacts with LY96, TLR1 and TLR6 (via extracellular domain). TLR2 seems to exist in heterodimers with either TLR1 or TLR6 before stimulation by the ligand. The heterodimers form bigger oligomers in response to their corresponding ligands as well as further heterotypic associations with other receptors such as CD14 and/or CD36. Binds MYD88 (via TIR domain). Interacts with TICAM1. Interacts with CNPY3. Interacts with ATG16L1. Interacts with PPP1R11. Interacts with TICAM2. Interacts with TIRAP. Ubiquitinated at Lys-754 by PPP1R11, leading to its degradation. Deubiquitinated by USP2. In terms of processing, glycosylation of Asn-442 is critical for secretion of the N-terminal ectodomain of TLR2.

It localises to the membrane. The protein resides in the cytoplasmic vesicle. The protein localises to the phagosome membrane. Its subcellular location is the membrane raft. In terms of biological role, cooperates with LY96 to mediate the innate immune response to bacterial lipoproteins and other microbial cell wall components. Cooperates with TLR1 or TLR6 to mediate the innate immune response to bacterial lipoproteins or lipopeptides. Acts via MYD88 and TRAF6, leading to NF-kappa-B activation, cytokine secretion and the inflammatory response. May also promote apoptosis in response to lipoproteins. Forms activation clusters composed of several receptors depending on the ligand, these clusters trigger signaling from the cell surface and subsequently are targeted to the Golgi in a lipid-raft dependent pathway. Forms the cluster TLR2:TLR6:CD14:CD36 in response to diacylated lipopeptides and TLR2:TLR1:CD14 in response to triacylated lipopeptides. This chain is Toll-like receptor 2 (TLR2), found in Gorilla gorilla gorilla (Western lowland gorilla).